The sequence spans 241 residues: Ubiquinone biosynthesis O-methyltransferase (241 aa).

Positions 44, 63, 84, and 128 each coordinate S-adenosyl-L-methionine.

The protein belongs to the methyltransferase superfamily. UbiG/COQ3 family.

It carries out the reaction a 3-demethylubiquinol + S-adenosyl-L-methionine = a ubiquinol + S-adenosyl-L-homocysteine + H(+). It catalyses the reaction a 3-(all-trans-polyprenyl)benzene-1,2-diol + S-adenosyl-L-methionine = a 2-methoxy-6-(all-trans-polyprenyl)phenol + S-adenosyl-L-homocysteine + H(+). Its pathway is cofactor biosynthesis; ubiquinone biosynthesis. Functionally, O-methyltransferase that catalyzes the 2 O-methylation steps in the ubiquinone biosynthetic pathway. The protein is Ubiquinone biosynthesis O-methyltransferase of Hydrogenovibrio crunogenus (strain DSM 25203 / XCL-2) (Thiomicrospira crunogena).